Reading from the N-terminus, the 437-residue chain is Na(+)/H(+) antiporter NhaA (437 aa).

The next 11 helical transmembrane spans lie at 12–32 (SMNI…AVIA), 65–85 (LTMI…MVGL), 103–123 (ALPF…YSMV), 133–153 (GLAI…SLLG), 162–182 (IFLT…IAIF), 186–206 (HVAY…YFIG), 214–234 (IFFL…GIHS), 308–328 (GAVN…VMFS), 333–353 (VIGG…FLGI), 377–397 (ISGV…IANL), and 412–432 (LGVL…LHWV).

It belongs to the NhaA Na(+)/H(+) (TC 2.A.33) antiporter family.

Its subcellular location is the cell inner membrane. It catalyses the reaction Na(+)(in) + 2 H(+)(out) = Na(+)(out) + 2 H(+)(in). Its function is as follows. Na(+)/H(+) antiporter that extrudes sodium in exchange for external protons. The protein is Na(+)/H(+) antiporter NhaA of Bacteroides fragilis (strain ATCC 25285 / DSM 2151 / CCUG 4856 / JCM 11019 / LMG 10263 / NCTC 9343 / Onslow / VPI 2553 / EN-2).